A 979-amino-acid chain; its full sequence is Pimaradiene synthase pbcA (979 aa).

Positions 34–39 (VYDTAW) match the VYDTAW motif motif. Residues 328–331 (DADD) carry the DXDD B-type cyclization motif motif. Mg(2+) is bound by residues aspartate 665, glutamate 669, asparagine 865, aspartate 866, serine 869, and aspartate 873. A DEXXE A-type cyclization motif motif is present at residues 665–669 (DEFME).

The protein belongs to the terpene synthase family. The cofactor is Mg(2+).

The catalysed reaction is (2E,6E,10E)-geranylgeranyl diphosphate = ent-copalyl diphosphate. It catalyses the reaction ent-copalyl diphosphate = ent-pimara-8(14),15-diene + diphosphate. It participates in secondary metabolite biosynthesis; terpenoid biosynthesis. Bifunctional terpene synthase; part of the gene cluster that mediates the biosynthesis of the diterpene ent-pimara-8(14),15-diene (PD). Within the cluster, the HMG-CoA reductase AN1593 functions in the mevalonate pathway, which produces isoprenoid precursors. The geranylgeranyl pyrophosphate (GGPP) synthase AN1592 is needed in the formation of GGPP, the precursor for diterpenes. Lastly, the pimaradiene synthase pbcA performs the 2 cyclization steps that convert GGPP to ent-pimara-8(14),15-diene with ent-copalyl diphosphate as an intermediate. The putative roles of the remaining cluster enzymes in ent-pimara-8(14),15-diene biosynthesis is unclear. The cytochrome P450 monooxygenase AN1598, the glutathione S-transferase AN1595, the oxidoreductases AN1596 and AN1597 probably function as decorative enzymes. It is possible that in biological conditions the compound is oxidized to ent-pimara-8(14),15-dien-19-oic acid, which is a bioactive diterpene compound predominant in many plant extracts. The protein is Pimaradiene synthase pbcA of Emericella nidulans (strain FGSC A4 / ATCC 38163 / CBS 112.46 / NRRL 194 / M139) (Aspergillus nidulans).